The sequence spans 527 residues: N-acetylglucosamine-1-phosphodiester alpha-N-acetylglucosaminidase (527 aa).

An N-terminal signal peptide occupies residues 1–25 (MASSMGRFLLFFIALRGFLLEASGD). Residues 26 to 49 (FGSGASRDDDVLLPYSRARARLAR) constitute a propeptide, removed in mature form. Over 50–463 (DCTRVHAGRL…SLLTRTTWLA (414 aa)) the chain is Lumenal. Disulfide bonds link Cys116-Cys149, Cys133-Cys324, Cys308-Cys315, Cys363-Cys374, and Cys381-Cys390. N-linked (GlcNAc...) asparagine glycans are attached at residues Asn209, Asn215, and Asn297. An EGF-like domain is found at 359 to 391 (DKLDCGPANCSQHGLCTETGCRCEAGWTGSNCS). 3 N-linked (GlcNAc...) asparagine glycosylation sites follow: Asn367, Asn389, and Asn421. Residues 464–484 (ITLALAFLLLISTAANVSLFL) form a helical membrane-spanning segment. Residues 485–527 (GSRAARRRHLDGAYVYHPLQEVNGEHPAAEKEQLGDSSNPFKD) lie on the Cytoplasmic side of the membrane. The segment at 498 to 505 (YVYHPLQE) is mediates the interaction with AP4M1. The Tyrosine-based internalization motif signature appears at 500 to 503 (YHPL). An NPF internalization motif motif is present at residues 523 to 527 (NPFKD).

Homotetramer arranged as two disulfide-linked homodimers. Interacts with AP4M1. In terms of processing, glycosylated. Contains complex N-linked oligosaccharides with appreciable amounts of sialic acid. Post-translationally, the precursor is cleaved and activated in the trans-Golgi network by a furin endopeptidase.

Its subcellular location is the golgi apparatus. The protein localises to the golgi stack membrane. It localises to the trans-Golgi network. The catalysed reaction is N(4)-[6-(N-acetyl-alpha-D-glucosaminyl-1-phospho)-alpha-D-mannosyl-(1-&gt;2)-alpha-D-mannosyl-(glycan)]-L-asparaginyl-[protein] + H2O = N(4)-[6-phospho-alpha-D-mannosyl-(1-&gt;2)-alpha-D-mannosyl-(glycan)]-L-asparaginyl-[protein] + N-acetyl-D-glucosamine + H(+). It functions in the pathway protein modification; protein glycosylation. Catalyzes the second step in the formation of the mannose 6-phosphate targeting signal on lysosomal enzyme oligosaccharides by removing GlcNAc residues from GlcNAc-alpha-P-mannose moieties, which are formed in the first step. Also hydrolyzes UDP-GlcNAc, a sugar donor for Golgi N-acetylglucosaminyltransferases. This chain is N-acetylglucosamine-1-phosphodiester alpha-N-acetylglucosaminidase (NAGPA), found in Bos taurus (Bovine).